The sequence spans 506 residues: SPbeta prophage-derived uncharacterized protein YonE (506 aa).

The disordered stretch occupies residues 473-506 (YTFTGNEVGRPNEGNKNNDNTVKSATSNGNDNPI). The span at 486–506 (GNKNNDNTVKSATSNGNDNPI) shows a compositional bias: polar residues.

This Bacillus subtilis (strain 168) protein is SPbeta prophage-derived uncharacterized protein YonE (yonE).